Here is a 177-residue protein sequence, read N- to C-terminus: Peroxiredoxin-2 (177 aa).

N-acetylalanine is present on Ala2. Positions 6–164 (ARIGKPAPDF…ALRLVQAFQY (159 aa)) constitute a Thioredoxin domain. Cys51 serves as the catalytic Cysteine sulfenic acid (-SOH) intermediate. Ser112 is subject to Phosphoserine.

Belongs to the peroxiredoxin family. AhpC/Prx1 subfamily. In terms of assembly, homodimer; disulfide-linked, upon oxidation. 5 homodimers assemble to form a ring-like decamer. Interacts with TIPIN. Post-translationally, the enzyme can be inactivated by further oxidation of the cysteine sulfenic acid (C(P)-SOH) to sulphinic acid (C(P)-SO2H) instead of its condensation to a disulfide bond. It can be reactivated by forming a transient disulfide bond with sulfiredoxin SRXN1, which reduces the cysteine sulfinic acid in an ATP- and Mg-dependent manner. Acetylation increases resistance to transition to high molecular-mass complexes. Deacetylated by HDAC6 which decreases reducing activity.

It localises to the cytoplasm. The catalysed reaction is a hydroperoxide + [thioredoxin]-dithiol = an alcohol + [thioredoxin]-disulfide + H2O. In terms of biological role, thiol-specific peroxidase that catalyzes the reduction of hydrogen peroxide and organic hydroperoxides to water and alcohols, respectively. Plays a role in cell protection against oxidative stress by detoxifying peroxides and as sensor of hydrogen peroxide-mediated signaling events. Might participate in the signaling cascades of growth factors and tumor necrosis factor-alpha by regulating the intracellular concentrations of H(2)O(2). This is Peroxiredoxin-2 (PRDX2) from Pongo abelii (Sumatran orangutan).